Here is a 495-residue protein sequence, read N- to C-terminus: Solute carrier family 2, facilitated glucose transporter member 3 (495 aa).

Topologically, residues 1-10 (MGTQKVTVSL) are cytoplasmic. Residues 11–32 (IFALSIATIGSFQFGYNTGVIN) traverse the membrane as a helical segment. The Extracellular segment spans residues 33–64 (APETIIKDFLNYTLEEKSENLPTEVLLTSLWS). A glycan (N-linked (GlcNAc...) asparagine) is linked at asparagine 43. Residues 65 to 85 (LSVAIFSVGGMIGSFSVGLFV) traverse the membrane as a helical segment. Residues 86–90 (NRFGR) are Cytoplasmic-facing. A helical membrane pass occupies residues 91–111 (RNSMLMVNLLAVAGGCLMGFC). Residues 112–118 (KIAQSVE) are Extracellular-facing. Residues 119 to 142 (MLILGRLIIGLFCGLCTGFVPMYI) traverse the membrane as a helical segment. The Cytoplasmic segment spans residues 143–153 (GEISPTALRGA). Residues 154–174 (FGTLNQLGIVIGILVAQIFGL) form a helical membrane-spanning segment. Glutamine 159 is a binding site for D-glucose. Over 175-183 (KVIMGTEEL) the chain is Extracellular. The chain crosses the membrane as a helical span at residues 184 to 204 (WPLLLGFTIIPAVLQSAALPF). At 205–269 (CPESPRFLLI…LFRSRSYRQP (65 aa)) the chain is on the cytoplasmic side. Threonine 232 bears the Phosphothreonine mark. Residues 270 to 290 (IIISIMLQLSQQLSGINAVFY) form a helical membrane-spanning segment. Residues 277 to 279 (QLS) are important for selectivity against fructose. D-glucose-binding positions include 280–281 (QQ) and asparagine 286. At 291 to 304 (YSTGIFKDAGVEEP) the chain is on the extracellular side. Residues 305–325 (IYATIGAGVVNTIFTVVSLFL) form a helical membrane-spanning segment. Residue asparagine 315 coordinates D-glucose. Residues 326-331 (VERAGR) lie on the Cytoplasmic side of the membrane. Residues 332–352 (RTLHMIGLGGMAVCSILMTIS) form a helical membrane-spanning segment. The Extracellular portion of the chain corresponds to 353–363 (LLLKDNYNWMS). The helical transmembrane segment at 364–389 (FVCIGAILVFVAFFEIGPGPIPWFIV) threads the bilayer. 2 residues coordinate D-glucose: glutamate 378 and tryptophan 386. Topologically, residues 390–399 (AELFSQGPRP) are cytoplasmic. The chain crosses the membrane as a helical span at residues 400–420 (AAMAVAGCSNWTSNFLVGLLF). Residues 421–429 (PSAAFYLGA) lie on the Extracellular side of the membrane. A helical membrane pass occupies residues 430 to 450 (YVFIIFTGFLIVFLVFTFFKV). At 451–495 (PETRGRTFEEITRAFEGQGQDANRAEKGPIVEMNSMQPVKETATV) the chain is on the cytoplasmic side. Residue serine 485 is modified to Phosphoserine. Phosphothreonine is present on threonine 492.

Belongs to the major facilitator superfamily. Sugar transporter (TC 2.A.1.1) family. Glucose transporter subfamily. As to quaternary structure, interacts with SMIM43; the interaction may promote SLC2A3-mediated glucose transport to meet the energy needs of mesendoderm differentiation.

The protein resides in the cell membrane. It localises to the perikaryon. Its subcellular location is the cell projection. The enzyme catalyses D-glucose(out) = D-glucose(in). It carries out the reaction D-galactose(in) = D-galactose(out). With respect to regulation, deoxyglucose transport is inhibited by D-glucose, D-galactose and maltose. Galactose transport is inhibited by D-glucose and maltose. Its function is as follows. Facilitative glucose transporter. Can also mediate the uptake of various other monosaccharides across the cell membrane. Mediates the uptake of glucose, 2-deoxyglucose, galactose, mannose, xylose and fucose, and probably also dehydroascorbate. Does not mediate fructose transport. Required for mesendoderm differentiation. This Canis lupus familiaris (Dog) protein is Solute carrier family 2, facilitated glucose transporter member 3.